Consider the following 311-residue polypeptide: Pyrimidine-specific ribonucleoside hydrolase RihA (311 aa).

H240 is a catalytic residue.

This sequence belongs to the IUNH family. RihA subfamily.

In terms of biological role, hydrolyzes with equal efficiency cytidine or uridine to ribose and cytosine or uracil, respectively. This Escherichia coli (strain ATCC 8739 / DSM 1576 / NBRC 3972 / NCIMB 8545 / WDCM 00012 / Crooks) protein is Pyrimidine-specific ribonucleoside hydrolase RihA.